The following is a 402-amino-acid chain: N-acetyltransferase Eis (402 aa).

In terms of domain architecture, N-acetyltransferase spans 3–154; it reads VTLCSPTEDD…RFARFHADAP (152 aa). Residues 85–87, 93–98, and 121–122 contribute to the acetyl-CoA site; these read VAV, RRGLLR, and SE. Tyr-126 (proton donor) is an active-site residue. Catalysis depends on Phe-402, which acts as the Proton acceptor; via carboxylate.

It belongs to the acetyltransferase Eis family. In terms of assembly, homohexamer; trimer of dimers.

The protein localises to the secreted. Its subcellular location is the host cytoplasmic vesicle. The protein resides in the host phagosome. It is found in the extracellular vesicle. It localises to the bacterial extracellular vesicle. The protein localises to the host extracellular space. It carries out the reaction L-lysyl-[protein] + acetyl-CoA = N(6)-acetyl-L-lysyl-[protein] + CoA + H(+). Functionally, effector that is released into the host cell and affects host immune responses. Acts as an acetyltransferase that acetylates lysine residues of host proteins. The chain is N-acetyltransferase Eis from Mycobacterium bovis (strain ATCC BAA-935 / AF2122/97).